A 194-amino-acid polypeptide reads, in one-letter code: Large ribosomal subunit protein eL15 (194 aa).

Residues 164-194 form a disordered region; that stretch reads SAGKKGRGLRNKGIGAEKVRPSIRAHGRRGK. Positions 184 to 194 are enriched in basic residues; that stretch reads PSIRAHGRRGK.

It belongs to the eukaryotic ribosomal protein eL15 family.

The chain is Large ribosomal subunit protein eL15 (rpl15e) from Methanocaldococcus jannaschii (strain ATCC 43067 / DSM 2661 / JAL-1 / JCM 10045 / NBRC 100440) (Methanococcus jannaschii).